A 465-amino-acid chain; its full sequence is Cysteine--tRNA ligase (465 aa).

Zn(2+) is bound at residue C29. The short motif at 31–41 (PTVYNYIHIGN) is the 'HIGH' region element. Residues C209, H234, and E238 each coordinate Zn(2+). The short motif at 266–270 (KMSKS) is the 'KMSKS' region element. Position 269 (K269) interacts with ATP. Residue S270 is modified to Phosphoserine.

This sequence belongs to the class-I aminoacyl-tRNA synthetase family. Monomer. Zn(2+) serves as cofactor.

It localises to the cytoplasm. The enzyme catalyses tRNA(Cys) + L-cysteine + ATP = L-cysteinyl-tRNA(Cys) + AMP + diphosphate. This Bacillus cytotoxicus (strain DSM 22905 / CIP 110041 / 391-98 / NVH 391-98) protein is Cysteine--tRNA ligase.